We begin with the raw amino-acid sequence, 162 residues long: NADH-quinone oxidoreductase subunit C (162 aa).

It belongs to the complex I 30 kDa subunit family. NDH-1 is composed of 14 different subunits. Subunits NuoB, C, D, E, F, and G constitute the peripheral sector of the complex.

It localises to the cell inner membrane. The catalysed reaction is a quinone + NADH + 5 H(+)(in) = a quinol + NAD(+) + 4 H(+)(out). In terms of biological role, NDH-1 shuttles electrons from NADH, via FMN and iron-sulfur (Fe-S) centers, to quinones in the respiratory chain. The immediate electron acceptor for the enzyme in this species is believed to be ubiquinone. Couples the redox reaction to proton translocation (for every two electrons transferred, four hydrogen ions are translocated across the cytoplasmic membrane), and thus conserves the redox energy in a proton gradient. This chain is NADH-quinone oxidoreductase subunit C, found in Trichlorobacter lovleyi (strain ATCC BAA-1151 / DSM 17278 / SZ) (Geobacter lovleyi).